A 259-amino-acid chain; its full sequence is uncharacterized protein (259 aa).

Belongs to the chlamydial CPn_0128/CT_035/TC_0305 family.

This is an uncharacterized protein from Chlamydia muridarum (strain MoPn / Nigg).